A 461-amino-acid polypeptide reads, in one-letter code: MDQSSRYANLNLKESDLIAGGRHVLCAYIMKPKDGFGNFLQTAAHFSAESSTGTNVEVSTTDDFTRGVDALVYEIDEANNVMKIAYPIELFDRNVIDGRAMIASFLTLTIGNNQGMGDVEYAKMHDFYVPPAYLRLFDGPSTTIRDLWRVLGRPVVDGGFIVGTIIKPKLGLRPQPFADACYDFWLGGDFIKNDEPQGNQVFAPFKETVRAVNEAMRRAQDKTGEPKLFSFNITADDHYEMVARGEYILETFADNADHVAFLVDGYVAGPAAVTTARRAFPKQYLHYHRAGHGAVTSPQSKRGYTAFVLSKMARLQGASGIHTGTMGFGKMEGEAADRAMAYMITEDSADGPFFHQEWLGMNPTTPIISGGMNALRMPGFFDNLGHSNLIMTAGGGAFGHIDGGAAGAKSLRQAEQCWKAGADPVEFAKDHREFARAFESFPHDADALYPNWRNSLKLAAA.

Asn-112 serves as a coordination point for substrate. The active-site Proton acceptor is Lys-167. Substrate is bound at residue Lys-169. Lys-192, Asp-194, and Glu-195 together coordinate Mg(2+). An N6-carboxylysine modification is found at Lys-192. The Proton acceptor role is filled by His-288. Substrate-binding residues include Arg-289, His-322, and Ser-369.

It belongs to the RuBisCO large chain family. Type II subfamily. In terms of assembly, homodimer. Mg(2+) is required as a cofactor.

It catalyses the reaction 2 (2R)-3-phosphoglycerate + 2 H(+) = D-ribulose 1,5-bisphosphate + CO2 + H2O. It carries out the reaction D-ribulose 1,5-bisphosphate + O2 = 2-phosphoglycolate + (2R)-3-phosphoglycerate + 2 H(+). In terms of biological role, ruBisCO catalyzes two reactions: the carboxylation of D-ribulose 1,5-bisphosphate, the primary event in carbon dioxide fixation, as well as the oxidative fragmentation of the pentose substrate. Both reactions occur simultaneously and in competition at the same active site. The chain is Ribulose bisphosphate carboxylase from Rhodopseudomonas palustris (strain HaA2).